Reading from the N-terminus, the 162-residue chain is UPF0114 protein Pput_0713 (162 aa).

4 consecutive transmembrane segments (helical) span residues 15 to 35 (LLAP…LKFF), 53 to 73 (LILV…LVMV), 109 to 126 (VAAS…RVFM), and 136 to 156 (LMWY…MGYL).

Belongs to the UPF0114 family.

It localises to the cell membrane. The chain is UPF0114 protein Pput_0713 from Pseudomonas putida (strain ATCC 700007 / DSM 6899 / JCM 31910 / BCRC 17059 / LMG 24140 / F1).